Consider the following 293-residue polypeptide: MDTTRYSKWGGSSEEVPGGPWGRWVHWSRRPLFLALAVLVTTVLWAVILSILLSKASTERAALLDGHDLLRTNASKQTAALGALKEEVGDCHSCCSGTQAQLQTTRAELGEAQAKLMEQESALRELRERVTQGLAEAGRGREDVRTELFRALEAVRLQNNSCEPCPTSWLSFEGSCYFFSVPKTTWAAAQDHCADASAHLVIVGGLDEQGFLTRNTRGRGYWLGLRAVRHLGKVQGYQWVDGVSLSFSHWNQGEPNDAWGRENCVMMLHTGLWNDAPCDSEKDGWICEKRHNC.

The Cytoplasmic segment spans residues 1 to 31 (MDTTRYSKWGGSSEEVPGGPWGRWVHWSRRP). A Phosphoserine modification is found at serine 12. A helical; Signal-anchor for type II membrane protein membrane pass occupies residues 32-52 (LFLALAVLVTTVLWAVILSIL). Residues 53 to 293 (LSKASTERAA…GWICEKRHNC (241 aa)) are Extracellular-facing. An N-linked (GlcNAc...) asparagine glycan is attached at asparagine 73. A coiled-coil region spans residues 96–136 (SGTQAQLQTTRAELGEAQAKLMEQESALRELRERVTQGLAE). Asparagine 159 carries an N-linked (GlcNAc...) asparagine glycan. Residues 172 to 287 (FEGSCYFFSV…CDSEKDGWIC (116 aa)) form the C-type lectin domain. A disulfide bridge connects residues cysteine 264 and cysteine 278.

(Microbial infection) Interacts with Japanese encephalitis virus envelope protein E. In terms of assembly, (Microbial infection) Interacts with ebolavirus glycoprotein. As to quaternary structure, (Microbial infection) Interacts with SARS-CoV spike glycoprotein. (Microbial infection) Interacts with lassa virus and Lymphocytic choriomeningitis virus glycoprotein. Expressed exclusively in fetal and adult liver and in lymph nodes. Specifically expressed by endothelial cells lining lymph node and liver sinuses (at protein level).

It is found in the cell membrane. Functionally, binds mannose, N-acetylglucosamine (GlcNAc) and fucose, but not galactose, in a Ca(2+)-dependent manner, in vitro. (Microbial infection) Acts as a receptor for Japanese encephalitis virus. Its function is as follows. (Microbial infection) Acts as a receptor for Ebolavirus. In terms of biological role, (Microbial infection) Acts as a receptor for SARS-CoV. Functionally, (Microbial infection) Acts as a receptor for Lassa virus and Lymphocytic choriomeningitis virus glycoprotein. This Homo sapiens (Human) protein is C-type lectin domain family 4 member G (CLEC4G).